A 944-amino-acid polypeptide reads, in one-letter code: ATP-dependent helicase fft1 (944 aa).

2 disordered regions span residues 89 to 109 (AAYDPHDQPPERDVSLKESSN) and 174 to 246 (SAQK…NSIP). Over residues 92–108 (DPHDQPPERDVSLKESS) the composition is skewed to basic and acidic residues. The segment covering 174–184 (SAQKLNNQPIE) has biased composition (polar residues). The span at 186 to 203 (SSVDKENAKRKRYVEEGT) shows a compositional bias: basic and acidic residues. Residues 217–227 (LSDEETNEDDL) are compositionally biased toward acidic residues. Over residues 230–246 (QSPTACTTDANIDNSIP) the composition is skewed to polar residues. The region spanning 426–592 (CLMYKAKLSG…ISLLAFMLPK (167 aa)) is the Helicase ATP-binding domain. 439–446 (DEMGLGKT) contributes to the ATP binding site. A DEGH box motif is present at residues 543–546 (DEGH). One can recognise a Helicase C-terminal domain in the interval 766–923 (KVKKLCSLLK…DSEKIQKEIS (158 aa)).

This sequence belongs to the SNF2/RAD54 helicase family.

Its subcellular location is the nucleus. It catalyses the reaction ATP + H2O = ADP + phosphate + H(+). DNA helicase that possesses intrinsic ATP-dependent nucleosome-remodeling activity and is required for heterochromatin organization. The chain is ATP-dependent helicase fft1 (fft1) from Schizosaccharomyces pombe (strain 972 / ATCC 24843) (Fission yeast).